The sequence spans 631 residues: Chaperone protein DnaK (631 aa).

Residue Thr-175 is modified to Phosphothreonine; by autocatalysis. Positions 586–631 are disordered; sequence GAEGAAAGAGAAGAAGAGASAGSASGSDDDTVEAEVVDDDDDKDNK. Over residues 602–611 the composition is skewed to low complexity; it reads AGASAGSASG. Residues 612 to 631 show a composition bias toward acidic residues; sequence SDDDTVEAEVVDDDDDKDNK.

Belongs to the heat shock protein 70 family.

In terms of biological role, acts as a chaperone. The sequence is that of Chaperone protein DnaK from Bifidobacterium longum subsp. infantis (strain ATCC 15697 / DSM 20088 / JCM 1222 / NCTC 11817 / S12).